Reading from the N-terminus, the 88-residue chain is Phosphocarrier protein HPr (88 aa).

In terms of domain architecture, HPr spans 1-88 (MKTQQFTVID…TLLTEMGLAQ (88 aa)). The active-site Pros-phosphohistidine intermediate is His15. Ser46 is subject to Phosphoserine; by HPrK/P.

This sequence belongs to the HPr family.

It localises to the cytoplasm. Its activity is regulated as follows. Phosphorylation on Ser-46 inhibits the phosphoryl transfer from enzyme I to HPr. Functionally, general (non sugar-specific) component of the phosphoenolpyruvate-dependent sugar phosphotransferase system (sugar PTS). This major carbohydrate active-transport system catalyzes the phosphorylation of incoming sugar substrates concomitantly with their translocation across the cell membrane. The phosphoryl group from phosphoenolpyruvate (PEP) is transferred to the phosphoryl carrier protein HPr by enzyme I. Phospho-HPr then transfers it to the PTS EIIA domain. Its function is as follows. P-Ser-HPr interacts with the catabolite control protein A (CcpA), forming a complex that binds to DNA at the catabolite response elements cre, operator sites preceding a large number of catabolite-regulated genes. Thus, P-Ser-HPr is a corepressor in carbon catabolite repression (CCR), a mechanism that allows bacteria to coordinate and optimize the utilization of available carbon sources. P-Ser-HPr also plays a role in inducer exclusion, in which it probably interacts with several non-PTS permeases and inhibits their transport activity. In Lysinibacillus sphaericus (Bacillus sphaericus), this protein is Phosphocarrier protein HPr (ptsH).